The primary structure comprises 154 residues: Ribonuclease H (154 aa).

Residues 1–141 (MKRIEAYTDG…ADELARAGME (141 aa)) form the RNase H type-1 domain. Asp-9, Glu-47, Asp-69, and Asp-133 together coordinate Mg(2+).

Belongs to the RNase H family. In terms of assembly, monomer. Mg(2+) serves as cofactor.

The protein localises to the cytoplasm. The enzyme catalyses Endonucleolytic cleavage to 5'-phosphomonoester.. Functionally, endonuclease that specifically degrades the RNA of RNA-DNA hybrids. The polypeptide is Ribonuclease H (Brucella abortus (strain 2308)).